Here is an 805-residue protein sequence, read N- to C-terminus: Angiotensin-converting enzyme 2 (805 aa).

A signal peptide spans 1–17 (MSSSSWLLLSLVAVTTA). The Extracellular portion of the chain corresponds to 18 to 740 (QSLTEENAKT…LEPPYQPPVT (723 aa)). The Peptidase M2 domain maps to 19-607 (SLTEENAKTF…QNRNSFVGWN (589 aa)). Asn-53 carries N-linked (GlcNAc...) asparagine glycosylation. Cys-133 and Cys-141 are disulfide-bonded. Arg-169 lines the chloride pocket. Residues Arg-273 and 345–346 (HP) each bind substrate. Cys-344 and Cys-361 are disulfide-bonded. His-374 contacts Zn(2+). Glu-375 functions as the Proton acceptor in the catalytic mechanism. The Zn(2+) site is built by His-378 and Glu-402. Positions 477 and 481 each coordinate chloride. His-505 serves as the catalytic Proton donor. Tyr-515 serves as a coordination point for substrate. Cys-530 and Cys-542 are oxidised to a cystine. N-linked (GlcNAc...) asparagine glycans are attached at residues Asn-536 and Asn-546. In terms of domain architecture, Collectrin-like spans 614-805 (ADQSIKVRIS…QNSDDAQTSF (192 aa)). Residues 652–659 (RKYFSIIK) form an essential for cleavage by ADAM17 region. Residues Asn-660 and Asn-690 are each glycosylated (N-linked (GlcNAc...) asparagine). The interval 697-716 (RSEVEDAIRMSRGRINDVFG) is essential for cleavage by TMPRSS11D and TMPRSS2. Residues 741–761 (IWLIIFGVVMALVVVGIIILI) form a helical membrane-spanning segment. Over 762–805 (VTGIKGRKKKNETKREENPYDSMDIGKGESNAGFQNSDDAQTSF) the chain is Cytoplasmic. Residues 771–805 (KNETKREENPYDSMDIGKGESNAGFQNSDDAQTSF) are disordered. An LIR motif is present at residues 778-786 (ENPYDSMDI). A Phosphotyrosine modification is found at Tyr-781. Positions 781–784 (YDSM) match the Endocytic sorting signal motif. The SH2-binding motif lies at 781–785 (YDSMD). A Phosphoserine modification is found at Ser-783. Residue Lys-788 forms a Glycyl lysine isopeptide (Lys-Gly) (interchain with G-Cter in ubiquitin) linkage. Residues 792-795 (NAGF) carry the PTB motif. Polar residues predominate over residues 793–805 (AGFQNSDDAQTSF). Residues 803-805 (TSF) carry the PDZ-binding motif.

The protein belongs to the peptidase M2 family. Homodimer. Interacts with the catalytically active form of TMPRSS2. Interacts with SLC6A19; this interaction is essential for expression and function of SLC6A19 in intestine. Interacts with ITGA5:ITGB1. Probably interacts (via endocytic sorting signal motif) with AP2M1; the interaction is inhibited by phosphorylation of Tyr-781. Interacts (via PDZ-binding motif) with NHERF1 (via PDZ domains); the interaction may enhance ACE2 membrane residence. In terms of assembly, (Microbial infection) Weakly interacts with SARS-CoV S protein. Zn(2+) is required as a cofactor. It depends on chloride as a cofactor. Post-translationally, proteolytic cleavage by ADAM17 generates a secreted form. Also cleaved by serine proteases: TMPRSS2, TMPRSS11D and HPN/TMPRSS1. In terms of processing, phosphorylated. Phosphorylation at Tyr-781 probably inhibits interaction with AP2M1 and enables interactions with proteins containing SH2 domains. Ubiquitinated. Ubiquitinated on Lys-788 via 'Lys-48'-linked ubiquitin. 'Lys-48'-linked deubiquitinated by USP50 on the Lys-788; leading to its stabilization. In terms of tissue distribution, expressed in heart, kidney and forebrain (at protein level). Expressed in the small intestine, with expression in the intestinal brush border (at protein level). Ubiquitously expressed, with highest levels in ileum, kidney and lung. In lung, expressed on vascular endothelial and airway epithelial cells. Also expressed at high levels in lung secretory club and goblet cells as well as in alveolar type 2 cells.

It localises to the secreted. The protein resides in the cell membrane. Its subcellular location is the cytoplasm. It is found in the cell projection. The protein localises to the cilium. It localises to the apical cell membrane. The enzyme catalyses angiotensin II + H2O = angiotensin-(1-7) + L-phenylalanine. It carries out the reaction angiotensin I + H2O = angiotensin-(1-9) + L-leucine. The catalysed reaction is bradykinin(1-8) + H2O = bradykinin(1-7) + L-phenylalanine. It catalyses the reaction neurotensin + H2O = neurotensin-(1-12) + L-leucine. The enzyme catalyses kinetensin + H2O = kinetensin-(1-8) + L-leucine. It carries out the reaction dynorphin A-(1-13) + H2O = dynorphin A-(1-12) + L-lysine. The catalysed reaction is apelin-13 + H2O = apelin-12 + L-phenylalanine. It catalyses the reaction [Pyr1]apelin-13 + H2O = [Pyr1]apelin-12 + L-phenylalanine. The enzyme catalyses apelin-17 + H2O = apelin-16 + L-phenylalanine. In terms of biological role, essential counter-regulatory carboxypeptidase of the renin-angiotensin hormone system that is a critical regulator of blood volume, systemic vascular resistance, and thus cardiovascular homeostasis. Converts angiotensin I to angiotensin 1-9, a nine-amino acid peptide with anti-hypertrophic effects in cardiomyocytes, and angiotensin II to angiotensin 1-7, which then acts as a beneficial vasodilator and anti-proliferation agent, counterbalancing the actions of the vasoconstrictor angiotensin II. Also removes the C-terminal residue from three other vasoactive peptides, neurotensin, kinetensin, and des-Arg bradykinin, but is not active on bradykinin. Also cleaves other biological peptides, such as apelins, casomorphins and dynorphin A. By cleavage of angiotensin II, may be an important regulator of heart function. By cleavage of angiotensin II, may also have a protective role in acute lung injury. Plays an important role in amino acid transport by acting as binding partner of amino acid transporter SLC6A19, regulating its trafficking on the cell surface and its activity. The sequence is that of Angiotensin-converting enzyme 2 (Ace2) from Mus musculus (Mouse).